The primary structure comprises 654 residues: Transcription factor E2-alpha (654 aa).

The 9aaTAD motif lies at 19–27; that stretch reads LLDFSMMFP. The disordered stretch occupies residues 31–103; sequence TNGKGRPASL…LGPGLGGKSG (73 aa). Over residues 55–68 the composition is skewed to low complexity; it reads SSGSWGSGDQSSSS. A compositionally biased stretch (polar residues) spans 69 to 79; that stretch reads FDPSRTFSEGT. Over residues 84-94 the composition is skewed to low complexity; that stretch reads SHSSLSSSTFL. Residues Ser-134 and Ser-139 each carry the phosphoserine modification. 4 disordered regions span residues 135–205, 239–268, 292–329, and 343–385; these read PGPL…SAKT, MLGGGSSPLPLPPGSGPVGSSGSSSTFGGL, SFSSAPGATYGGVSSHTPPVSGADSLLGSRGTTAGSSG, and DHSS…YDGG. Low complexity predominate over residues 147–156; that stretch reads SQYYPSYSGS. The Nuclear localization signal motif lies at 170-176; sequence PKKVRKV. Low complexity predominate over residues 256–268; sequence VGSSGSSSTFGGL. The segment covering 343–354 has biased composition (low complexity); sequence DHSSNNFSSSPS. Phosphothreonine is present on Thr-355. The residue at position 359 (Ser-359) is a Phosphoserine. Residue Arg-371 is modified to Omega-N-methylarginine. A Phosphoserine modification is found at Ser-379. The interval 389–425 is leucine-zipper; the sequence is LQSKIEDHLDEAIHVLRSHAVGTAGDMHTLLPGHGAL. The segment at 461–552 is disordered; the sequence is NHAALPSQPG…KAEREKERRV (92 aa). Lys-498 participates in a covalent cross-link: Glycyl lysine isopeptide (Lys-Gly) (interchain with G-Cter in SUMO2). Residues 512–523 are compositionally biased toward basic and acidic residues; sequence DHSEEEKKELKA. At Ser-529 the chain carries Phosphoserine. Asp-531 is modified (phosphothreonine). The span at 542–552 shows a compositional bias: basic and acidic residues; that stretch reads QKAEREKERRV. The bHLH domain maps to 549-602; sequence ERRVANNARERLRVRDINEAFKELGRMCQLHLNSEKPQTKLLILHQAVSVILNL. Lys-625 is covalently cross-linked (Glycyl lysine isopeptide (Lys-Gly) (interchain with G-Cter in SUMO2)). The disordered stretch occupies residues 633–654; it reads PQMVLSAPHPGLSEAHNPAGHM.

In terms of assembly, homodimer. Heterodimer; efficient DNA binding requires dimerization with another bHLH protein. Forms a heterodimer with ASH1, TWIST1 and TWIST2. Forms a heterodimer with MYOG; heterodimerization enhances MYOG DNA-binding and transcriptional activities. Forms a heterodimer with NEUROD1; the heterodimer is inhibited in presence of ID2, but not NR0B2, to E-box element. Forms a heterodimer with TCF15; the heterodimer binds E-box element. Forms a heterodimer with ATOH8; repress transcription of TCF3 and TCF3/NEUROG3 dimer-induced transactivation of E box-dependent promoters. Component of a nuclear TAL-1 complex composed at least of CBFA2T3, LDB1, TAL1 and TCF3. Interacts with NEUROD2, PTF1A and TGFB1I1. Interacts with EP300 and UBE2I. Interacts with BHLHA9. Interacts with ASB2; the interaction is mediated by SKP2 and targets TCF3 for Notch-induced proteasomal degradation. Forms a heterodimer with ATOH7; required for ATOH7 DNA-binding. As to quaternary structure, interacts with RALGAPA1 and FIGLA. In terms of processing, phosphorylated following NGF stimulation. Post-translationally, undergoes Notch-induced ubiquitination and subsequent proteasomal degradation which is mediated by ASB1 or ASB2, the substrate-recognition components of probable ECS E3 ubiquitin-protein ligase complexes.

The protein resides in the nucleus. Transcriptional regulator involved in the initiation of neuronal differentiation and mesenchymal to epithelial transition. Heterodimers between TCF3 and tissue-specific basic helix-loop-helix (bHLH) proteins play major roles in determining tissue-specific cell fate during embryogenesis, like muscle or early B-cell differentiation. Together with TCF15, required for the mesenchymal to epithelial transition. Dimers bind DNA on E-box motifs: 5'-CANNTG-3'. Binds to the kappa-E2 site in the kappa immunoglobulin gene enhancer. Binds to IEB1 and IEB2, which are short DNA sequences in the insulin gene transcription control region. Functionally, facilitates ATOH7 binding to DNA at the consensus sequence 5'-CAGGTG-3', and positively regulates transcriptional activity. The protein is Transcription factor E2-alpha (TCF3) of Homo sapiens (Human).